Consider the following 461-residue polypeptide: Photosystem II CP43 reaction center protein (461 aa).

Transmembrane regions (helical) follow at residues 57 to 81, 122 to 143, 166 to 188, 243 to 263, and 279 to 300; these read LFEV…SHLA, LRGP…KDKN, KAMF…RIIS, KPFG…LSYS, and WYNN…ASQS. E355 contacts [CaMn4O5] cluster. A helical membrane pass occupies residues 435-459; it reads RARAAAAGFEKGIDRATEPVLAMRD.

Belongs to the PsbB/PsbC family. PsbC subfamily. As to quaternary structure, PSII is composed of 1 copy each of membrane proteins PsbA, PsbB, PsbC, PsbD, PsbE, PsbF, PsbH, PsbI, PsbJ, PsbK, PsbL, PsbM, PsbT, PsbX, PsbY, PsbZ, Psb30/Ycf12, peripheral proteins PsbO, CyanoQ (PsbQ), PsbU, PsbV and a large number of cofactors. It forms dimeric complexes. Requires Binds multiple chlorophylls and provides some of the ligands for the Ca-4Mn-5O cluster of the oxygen-evolving complex. It may also provide a ligand for a Cl- that is required for oxygen evolution. PSII binds additional chlorophylls, carotenoids and specific lipids. as cofactor.

The protein resides in the cellular thylakoid membrane. One of the components of the core complex of photosystem II (PSII). It binds chlorophyll and helps catalyze the primary light-induced photochemical processes of PSII. PSII is a light-driven water:plastoquinone oxidoreductase, using light energy to abstract electrons from H(2)O, generating O(2) and a proton gradient subsequently used for ATP formation. The sequence is that of Photosystem II CP43 reaction center protein from Synechococcus elongatus (strain ATCC 33912 / PCC 7942 / FACHB-805) (Anacystis nidulans R2).